The chain runs to 292 residues: MAKDEDNSRVHLLDLPWEDVLVPHILSYLPLRHILSLQRVSKPFHSLVHIYLCNCRHFDSTQLGPQLPKTTFSELLKNNTVLQKLDLQSCSDWLTDKELLPIIGQNHHLTYINLNSCGQLTRQSLVAISLSCPHLQNICLGHCDWVDCLSMRSLADHCKCLEAIDLTACRQLKDDAISYLVQKSTRLKSLSLAVNANISDIAVEETAKSCRDLEHLDLTGCLRVKNDSIRTLAEYCNNLKSLKVKHCHNVTESSLGNLRKREVVLDVEPPLQRALVLLQDVVGFAPFINLQI.

One can recognise an F-box domain in the interval 12 to 59; sequence LLDLPWEDVLVPHILSYLPLRHILSLQRVSKPFHSLVHIYLCNCRHFD. LRR repeat units lie at residues 134-155, 160-181, 186-207, 212-233, and 238-259; these read HLQN…RSLA, CLEA…SYLV, RLKS…EETA, DLEH…RTLA, and NLKS…GNLR.

Belongs to the FBXL15 family. As to quaternary structure, part of the SCF (SKP1-CUL1-F-box) E3 ubiquitin-protein ligase complex SCF(FBXL15).

It localises to the cytoplasm. It functions in the pathway protein modification; protein ubiquitination. In terms of biological role, substrate recognition component of a SCF (SKP1-CUL1-F-box protein) E3 ubiquitin-protein ligase complex which mediates the ubiquitination and subsequent proteasomal degradation of target proteins. Acts as a positive regulator of the BMP signaling pathway. Required for dorsal/ventral pattern formation. This is F-box/LRR-repeat protein 15 (fbxl15) from Xenopus laevis (African clawed frog).